The following is a 117-amino-acid chain: Large ribosomal subunit protein bL19 (117 aa).

Belongs to the bacterial ribosomal protein bL19 family.

Functionally, this protein is located at the 30S-50S ribosomal subunit interface and may play a role in the structure and function of the aminoacyl-tRNA binding site. In Proteus mirabilis (strain HI4320), this protein is Large ribosomal subunit protein bL19.